The primary structure comprises 430 residues: Tol-Pal system protein TolB (430 aa).

An N-terminal signal peptide occupies residues 1–21 (MKQALRVAFGFLILWASVLHA).

It belongs to the TolB family. In terms of assembly, the Tol-Pal system is composed of five core proteins: the inner membrane proteins TolA, TolQ and TolR, the periplasmic protein TolB and the outer membrane protein Pal. They form a network linking the inner and outer membranes and the peptidoglycan layer.

Its subcellular location is the periplasm. Functionally, part of the Tol-Pal system, which plays a role in outer membrane invagination during cell division and is important for maintaining outer membrane integrity. TolB occupies a key intermediary position in the Tol-Pal system because it communicates directly with both membrane-embedded components, Pal in the outer membrane and TolA in the inner membrane. This is Tol-Pal system protein TolB from Shigella boydii serotype 4 (strain Sb227).